The chain runs to 496 residues: Genome polyprotein (496 aa).

The Extracellular segment spans residues 1–447 (SRCTHLENRD…HTVLGGAFNS (447 aa)). 6 disulfides stabilise this stretch: cysteine 3–cysteine 30, cysteine 60–cysteine 116, cysteine 60–cysteine 121, cysteine 74–cysteine 105, cysteine 92–cysteine 116, and cysteine 92–cysteine 121. Positions 98-111 (DRGWGNHCGLFGKG) are fusion peptide. A glycan (N-linked (GlcNAc...) asparagine; by host) is linked at asparagine 154. Cystine bridges form between cysteine 186–cysteine 290 and cysteine 307–cysteine 338. A helical transmembrane segment spans residues 448-468 (IFGGVGFLPKLLMGVALAWLG). The Cytoplasmic segment spans residues 469 to 479 (LNTRNPTMSIS). Residues 480-496 (FLLTGGLVLAMTLGVGA) form a helical membrane-spanning segment.

As to quaternary structure, homodimer; in the endoplasmic reticulum and Golgi. In terms of processing, N-glycosylated.

The protein resides in the virion membrane. The protein localises to the host endoplasmic reticulum membrane. Its function is as follows. Binds to host cell surface receptor and mediates fusion between viral and cellular membranes. Envelope protein is synthesized in the endoplasmic reticulum in the form of heterodimer with protein prM. They play a role in virion budding in the ER, and the newly formed immature particle is covered with 60 spikes composed of heterodimer between precursor prM and envelope protein E. The virion is transported to the Golgi apparatus where the low pH causes dissociation of PrM-E heterodimers and formation of E homodimers. prM-E cleavage is ineficient, and many virions are only partially matured. These uncleaved prM would play a role in immune evasion. The chain is Genome polyprotein from Louping ill virus (strain SB 526) (Li).